The sequence spans 121 residues: Glycine cleavage system H protein (121 aa).

Positions 16–98 (VATIGITAHA…EAGGWFAKVR (83 aa)) constitute a Lipoyl-binding domain. Residue lysine 57 is modified to N6-lipoyllysine.

This sequence belongs to the GcvH family. In terms of assembly, the glycine cleavage system is composed of four proteins: P, T, L and H. It depends on (R)-lipoate as a cofactor.

In terms of biological role, the glycine cleavage system catalyzes the degradation of glycine. The H protein shuttles the methylamine group of glycine from the P protein to the T protein. This Phenylobacterium zucineum (strain HLK1) protein is Glycine cleavage system H protein.